The primary structure comprises 725 residues: Ribosomal RNA large subunit methyltransferase K/L (725 aa).

The THUMP domain occupies 45-156 (SGYRACLWSR…RGRLSLGIDL (112 aa)).

The protein belongs to the methyltransferase superfamily. RlmKL family.

The protein resides in the cytoplasm. The catalysed reaction is guanosine(2445) in 23S rRNA + S-adenosyl-L-methionine = N(2)-methylguanosine(2445) in 23S rRNA + S-adenosyl-L-homocysteine + H(+). It catalyses the reaction guanosine(2069) in 23S rRNA + S-adenosyl-L-methionine = N(2)-methylguanosine(2069) in 23S rRNA + S-adenosyl-L-homocysteine + H(+). Functionally, specifically methylates the guanine in position 2445 (m2G2445) and the guanine in position 2069 (m7G2069) of 23S rRNA. This Marinobacter nauticus (strain ATCC 700491 / DSM 11845 / VT8) (Marinobacter aquaeolei) protein is Ribosomal RNA large subunit methyltransferase K/L.